The chain runs to 71 residues: Small ribosomal subunit protein eS17 (71 aa).

It belongs to the eukaryotic ribosomal protein eS17 family.

The polypeptide is Small ribosomal subunit protein eS17 (Pyrobaculum islandicum (strain DSM 4184 / JCM 9189 / GEO3)).